A 113-amino-acid polypeptide reads, in one-letter code: Holo-[acyl-carrier-protein] synthase (113 aa).

Mg(2+)-binding residues include Asp-5 and Glu-50.

The protein belongs to the P-Pant transferase superfamily. AcpS family. It depends on Mg(2+) as a cofactor.

Its subcellular location is the cytoplasm. The enzyme catalyses apo-[ACP] + CoA = holo-[ACP] + adenosine 3',5'-bisphosphate + H(+). Transfers the 4'-phosphopantetheine moiety from coenzyme A to a Ser of acyl-carrier-protein. This Nautilia profundicola (strain ATCC BAA-1463 / DSM 18972 / AmH) protein is Holo-[acyl-carrier-protein] synthase.